Consider the following 268-residue polypeptide: UPF0294 protein ETA_26410 (268 aa).

The protein belongs to the UPF0294 family.

The protein localises to the cytoplasm. The polypeptide is UPF0294 protein ETA_26410 (Erwinia tasmaniensis (strain DSM 17950 / CFBP 7177 / CIP 109463 / NCPPB 4357 / Et1/99)).